Consider the following 272-residue polypeptide: Insertion element IS600 uncharacterized 31 kDa protein (272 aa).

Positions 105–268 constitute an Integrase catalytic domain; sequence APTAPNQVWV…SPAAFREKYH (164 aa).

The polypeptide is Insertion element IS600 uncharacterized 31 kDa protein (Shigella sonnei).